A 324-amino-acid chain; its full sequence is MNSEVERPSFLSLPDEIILSCLARISRSYYPKLSLVCKTFRTLLISNELIVARLHLKTHETFCHVCLKFPDKPNPSMFTLWIKPGTILTNQLEKNKRSTRDTRLVQIPSSYYYNVPFYLVMVGSEVYGLSQRNDPSSNMFVRNKGDIFLCKAPNMTVARAKASAVVFNGKIYVMGGCMADESVNWGEVFDIKTQTWEALPDPGPEFRFSSIRKIDVFQEKLYVRSNEKKDSVYDPKEEWRVVKGLDMLNRNLGCGTIEIVHYGGKLLILWDKVDLSHDKDIWCAVIALEKRHGSDEVWGNIEWADIVLTVPSSYVFVNSLETGF.

Residues 7-54 (RPSFLSLPDEIILSCLARISRSYYPKLSLVCKTFRTLLISNELIVARL) enclose the F-box domain. The Kelch repeat unit spans residues 170-216 (KIYVMGGCMADESVNWGEVFDIKTQTWEALPDPGPEFRFSSIRKIDV).

In Arabidopsis thaliana (Mouse-ear cress), this protein is Putative F-box/kelch-repeat protein At5g28160.